The following is a 193-amino-acid chain: Surfactant protein C (193 aa).

Residues 1–23 (MDMSSKEVLMESPPDYSAGPRSQ) constitute a propeptide that is removed on maturation. Residues C28 and C29 are each lipidated (S-palmitoyl cysteine). Residues 59-193 (HMSQKHTEMV…LCGELPLYYI (135 aa)) constitute a propeptide that is removed on maturation. Residues 94-193 (FSIGSTGIVV…LCGELPLYYI (100 aa)) enclose the BRICHOS domain. C121 and C185 form a disulfide bridge. The tract at residues 147–170 (KPSTPTSKLGQEEGHDTGSESDSS) is disordered.

It localises to the secreted. It is found in the extracellular space. The protein resides in the surface film. Its function is as follows. Pulmonary surfactant associated proteins promote alveolar stability by lowering the surface tension at the air-liquid interface in the peripheral air spaces. The sequence is that of Surfactant protein C from Mus musculus (Mouse).